The primary structure comprises 155 residues: SsrA-binding protein (155 aa).

Belongs to the SmpB family.

Its subcellular location is the cytoplasm. Its function is as follows. Required for rescue of stalled ribosomes mediated by trans-translation. Binds to transfer-messenger RNA (tmRNA), required for stable association of tmRNA with ribosomes. tmRNA and SmpB together mimic tRNA shape, replacing the anticodon stem-loop with SmpB. tmRNA is encoded by the ssrA gene; the 2 termini fold to resemble tRNA(Ala) and it encodes a 'tag peptide', a short internal open reading frame. During trans-translation Ala-aminoacylated tmRNA acts like a tRNA, entering the A-site of stalled ribosomes, displacing the stalled mRNA. The ribosome then switches to translate the ORF on the tmRNA; the nascent peptide is terminated with the 'tag peptide' encoded by the tmRNA and targeted for degradation. The ribosome is freed to recommence translation, which seems to be the essential function of trans-translation. The chain is SsrA-binding protein from Bacillus mycoides (strain KBAB4) (Bacillus weihenstephanensis).